The sequence spans 270 residues: D-aminoacyl-tRNA deacylase (270 aa).

The protein belongs to the DtdA deacylase family. Monomer. The cofactor is Zn(2+).

The enzyme catalyses a D-aminoacyl-tRNA + H2O = a tRNA + a D-alpha-amino acid + H(+). It carries out the reaction glycyl-tRNA(Ala) + H2O = tRNA(Ala) + glycine + H(+). D-aminoacyl-tRNA deacylase with broad substrate specificity. By recycling D-aminoacyl-tRNA to D-amino acids and free tRNA molecules, this enzyme counteracts the toxicity associated with the formation of D-aminoacyl-tRNA entities in vivo. The chain is D-aminoacyl-tRNA deacylase from Pyrococcus furiosus (strain ATCC 43587 / DSM 3638 / JCM 8422 / Vc1).